Reading from the N-terminus, the 145-residue chain is Transthyretin (145 aa).

Positions 1–20 (MASHRLFLLCLAGLVFMSEA) are cleaved as a signal peptide. Position 28 is a sulfocysteine (C28). K33 lines the L-thyroxine pocket. 4-carboxyglutamate is present on E60. Position 70 is a phosphoserine (S70). E72 is an L-thyroxine binding site. N-linked (GlcNAc...) asparagine glycosylation occurs at N116. An L-thyroxine-binding site is contributed by S135.

Belongs to the transthyretin family. As to quaternary structure, homotetramer. Dimer of dimers. In the homotetramer, subunits assemble around a central channel that can accommodate two ligand molecules. Interacts with RBP4. Post-translationally, sulfonation of the reactive cysteine Cys-28 enhances the stability of the native conformation of TTR, avoiding misassembly of the protein leading to amyloid formation.

It is found in the secreted. In terms of biological role, thyroid hormone-binding protein. Probably transports thyroxine from the bloodstream to the brain. The protein is Transthyretin (TTR) of Erinaceus europaeus (Western European hedgehog).